Here is a 329-residue protein sequence, read N- to C-terminus: Phenylalanine--tRNA ligase alpha subunit (329 aa).

Position 246 (glutamate 246) interacts with Mg(2+).

This sequence belongs to the class-II aminoacyl-tRNA synthetase family. Phe-tRNA synthetase alpha subunit type 1 subfamily. Tetramer of two alpha and two beta subunits. Mg(2+) is required as a cofactor.

It localises to the cytoplasm. The catalysed reaction is tRNA(Phe) + L-phenylalanine + ATP = L-phenylalanyl-tRNA(Phe) + AMP + diphosphate + H(+). The protein is Phenylalanine--tRNA ligase alpha subunit of Helicobacter hepaticus (strain ATCC 51449 / 3B1).